A 477-amino-acid chain; its full sequence is Ectonucleotide pyrophosphatase/phosphodiesterase family member 5 (477 aa).

The signal sequence occupies residues 1–24 (MTSKFLLVSFILAALSLSTTFSLQ). Zn(2+) is bound by residues Asp-36 and Thr-72. Thr-72 serves as the catalytic Nucleophile. N-linked (GlcNAc...) asparagine glycans are attached at residues Asn-101 and Asn-158. The Zn(2+) site is built by Asp-191, His-195, Asp-238, and His-239. N-linked (GlcNAc...) asparagine glycosylation is found at Asn-292 and Asn-329. Residue His-339 participates in Zn(2+) binding. N-linked (GlcNAc...) asparagine glycosylation is found at Asn-362, Asn-369, Asn-382, and Asn-389. Residues 432 to 452 (PYFIGVSLGSIIVIVFFVIFI) form a helical membrane-spanning segment.

The protein belongs to the nucleotide pyrophosphatase/phosphodiesterase family. Requires Zn(2+) as cofactor. Post-translationally, N-glycosylated.

Its subcellular location is the secreted. The protein resides in the membrane. Its function is as follows. Can hydrolyze NAD but cannot hydrolyze nucleotide di- and triphosphates. Lacks lysopholipase D activity. May play a role in neuronal cell communication. The chain is Ectonucleotide pyrophosphatase/phosphodiesterase family member 5 from Homo sapiens (Human).